We begin with the raw amino-acid sequence, 66 residues long: UPF0337 protein RPA4217 (66 aa).

This sequence belongs to the UPF0337 (CsbD) family.

This Rhodopseudomonas palustris (strain ATCC BAA-98 / CGA009) protein is UPF0337 protein RPA4217.